Consider the following 415-residue polypeptide: rRNA methyltransferase 3, mitochondrial (415 aa).

Residues 1–47 constitute a mitochondrion transit peptide; sequence MAALCRGTVRACILKPLGLSVSLQVKRNVRALRRTPVRVLPAAEKGR. The tract at residues 41-73 is disordered; it reads PAAEKGRERKEVEARRPQQPRQSEYQTRTSQGV. Residues 44 to 56 are compositionally biased toward basic and acidic residues; sequence EKGRERKEVEARR. The segment covering 59–73 has biased composition (polar residues); it reads QPRQSEYQTRTSQGV. S-adenosyl-L-methionine contacts are provided by G357, I381, and L390.

This sequence belongs to the class IV-like SAM-binding methyltransferase superfamily. RNA methyltransferase TrmH family.

It is found in the mitochondrion. The catalysed reaction is a uridine in rRNA + S-adenosyl-L-methionine = a 2'-O-methyluridine in rRNA + S-adenosyl-L-homocysteine + H(+). In terms of biological role, S-adenosyl-L-methionine-dependent 2'-O-ribose methyltransferase that catalyzes the formation of 2'-O-methylguanosine at position 1370 (Gm1370) in the mitochondrial large subunit ribosomal RNA (mtLSU rRNA), a conserved modification in the peptidyl transferase domain of the mtLSU rRNA. Also required for formation of 2'-O-methyluridine at position 1369 (Um1369) mediated by MRM2. This chain is rRNA methyltransferase 3, mitochondrial, found in Xenopus tropicalis (Western clawed frog).